The primary structure comprises 176 residues: Large ribosomal subunit protein uL22 (176 aa).

The tract at residues valine 113–aspartate 176 is disordered. Residues serine 136–alanine 152 show a composition bias toward low complexity. Residues threonine 159–aspartate 176 are compositionally biased toward basic and acidic residues.

The protein belongs to the universal ribosomal protein uL22 family. As to quaternary structure, part of the 50S ribosomal subunit.

In terms of biological role, this protein binds specifically to 23S rRNA; its binding is stimulated by other ribosomal proteins, e.g. L4, L17, and L20. It is important during the early stages of 50S assembly. It makes multiple contacts with different domains of the 23S rRNA in the assembled 50S subunit and ribosome. Its function is as follows. The globular domain of the protein is located near the polypeptide exit tunnel on the outside of the subunit, while an extended beta-hairpin is found that lines the wall of the exit tunnel in the center of the 70S ribosome. In Mycobacterium marinum (strain ATCC BAA-535 / M), this protein is Large ribosomal subunit protein uL22.